Here is a 394-residue protein sequence, read N- to C-terminus: Phosphoglycerate kinase (394 aa).

Residues 21–23, Arg36, 59–62, Arg118, and Arg151 each bind substrate; these read DFN and HLGR. Position 183 is a phosphoserine (Ser183). ATP is bound by residues Lys201 and Gly292. A Phosphothreonine modification is found at Thr299. Residues Glu323 and 350 to 353 each bind ATP; that span reads GGDS.

The protein belongs to the phosphoglycerate kinase family. Monomer.

The protein localises to the cytoplasm. It catalyses the reaction (2R)-3-phosphoglycerate + ATP = (2R)-3-phospho-glyceroyl phosphate + ADP. It participates in carbohydrate degradation; glycolysis; pyruvate from D-glyceraldehyde 3-phosphate: step 2/5. This is Phosphoglycerate kinase (pgk) from Priestia megaterium (strain DSM 319 / IMG 1521) (Bacillus megaterium).